Reading from the N-terminus, the 253-residue chain is uncharacterized protein (253 aa).

Residue 10 to 35 (ISGAASKRGIGRATAELFASHGARVA) coordinates NADP(+). Position 144 (Ser144) interacts with substrate. Tyr159 functions as the Proton acceptor in the catalytic mechanism.

This sequence belongs to the short-chain dehydrogenases/reductases (SDR) family.

This is an uncharacterized protein from Sinorhizobium fredii (strain NBRC 101917 / NGR234).